Here is a 1405-residue protein sequence, read N- to C-terminus: DNA-directed RNA polymerase subunit beta' (1405 aa).

Zn(2+) contacts are provided by C70, C72, C85, and C88. Residues D460, D462, and D464 each coordinate Mg(2+). Residues C814, C888, C895, and C898 each coordinate Zn(2+).

It belongs to the RNA polymerase beta' chain family. The RNAP catalytic core consists of 2 alpha, 1 beta, 1 beta' and 1 omega subunit. When a sigma factor is associated with the core the holoenzyme is formed, which can initiate transcription. Mg(2+) is required as a cofactor. It depends on Zn(2+) as a cofactor.

It catalyses the reaction RNA(n) + a ribonucleoside 5'-triphosphate = RNA(n+1) + diphosphate. Functionally, DNA-dependent RNA polymerase catalyzes the transcription of DNA into RNA using the four ribonucleoside triphosphates as substrates. This Shewanella sp. (strain ANA-3) protein is DNA-directed RNA polymerase subunit beta'.